Consider the following 315-residue polypeptide: Ribose-phosphate pyrophosphokinase (315 aa).

Residues 37–39 and 96–97 contribute to the ATP site; these read DGE and RQ. H131 and D170 together coordinate Mg(2+). The active site involves K194. D-ribose 5-phosphate is bound by residues R196, D220, and 224–228; that span reads DTGGT.

Belongs to the ribose-phosphate pyrophosphokinase family. Class I subfamily. As to quaternary structure, homohexamer. The cofactor is Mg(2+).

The protein resides in the cytoplasm. The enzyme catalyses D-ribose 5-phosphate + ATP = 5-phospho-alpha-D-ribose 1-diphosphate + AMP + H(+). It functions in the pathway metabolic intermediate biosynthesis; 5-phospho-alpha-D-ribose 1-diphosphate biosynthesis; 5-phospho-alpha-D-ribose 1-diphosphate from D-ribose 5-phosphate (route I): step 1/1. Functionally, involved in the biosynthesis of the central metabolite phospho-alpha-D-ribosyl-1-pyrophosphate (PRPP) via the transfer of pyrophosphoryl group from ATP to 1-hydroxyl of ribose-5-phosphate (Rib-5-P). In Buchnera aphidicola subsp. Acyrthosiphon pisum (strain APS) (Acyrthosiphon pisum symbiotic bacterium), this protein is Ribose-phosphate pyrophosphokinase.